Consider the following 121-residue polypeptide: UPF0738 protein BLi01253/BL05110 (121 aa).

It belongs to the UPF0738 family.

This Bacillus licheniformis (strain ATCC 14580 / DSM 13 / JCM 2505 / CCUG 7422 / NBRC 12200 / NCIMB 9375 / NCTC 10341 / NRRL NRS-1264 / Gibson 46) protein is UPF0738 protein BLi01253/BL05110.